The following is a 2603-amino-acid chain: MVPYYQPASSCGSNTMAAMDEHQHNEDATIPIAIIGMSCRFPGNATSPEKLWELCAQGRSAWSSIPKSRFRQEGFYNPNAERVGTSHVVGGHFLEEDPSLFDASFFNLSAEAAKTMDPQFRLQLESVYEAMESAGITLEHIAGSDTSVYAGACFRDYHDSLVRDPDLVPRFLLTGNGAAMSSNRVSHFYDLRGASMTVDTGCSTTLTALHLACQGLRNRESKTSIVTGANVILNPDMFVTMSSLGLLGPEGKSHTFDARANGYGRGEGIATVIIKRLDDALRAQDPIRCIIRGTALNQDGRTATLTSPSQTAQSDLIRACYRAAALDPNDTAFLAAHGTGTRTGDAVEIAAAADVFGEKRSPERPLWIGSVKTNIGHSEATSGLASVIQAALALEKGLIPPNINFKEPNEKLGQVSAAVRVPSNLQKWPSVSGVRRASVNNFGYGGANAHVILESGIPGHTPIANGSGRSNGTGNGHNGANGTTNGHNGTNGTTNGHFDATQATNGHYGTDETPDYAPLDSFVISISAKEEASARSMVTNLADYLRTLQVQDETKHFKSIAHTLGSHRSMFKWTAAKSITGPEELIAAAEGGQFQASRALERTRLGFVFTGQGAQWFAMGRELINTYPVFRQSLDRADRYLKEFGCEWSIIDELSRDAENSNVNDMTLSPPLCTAVQISLVQLLESWGIVPTAVTGHSSGEIAAAYAAGALDFKSAMAVTYFRGEVGLACQDKIVGKGGMIAVGLGPEDAEDRIARVQSGKIVVACINSQSSVTVSGDLSGIVELEDLLKAEGVFARRVKVQAAYHSHHMQVIANGYLTSLKDMLKPTKKFGKIIYSSPTTGRRETNAKLMASAQHWVNNMLSPVRFAESFQNMCFSNRNSSQSEEIFQDVDIVLEVGPHGMLQGPIQQMMSLPIFERARLPYISCLLRGQSAVHTMQTVAAGLMGWGYRVDMVAVNFPQGTYGVKILHDLPSYPWNHDNSHWWEPRLNKAHRQRVHPPHDLLGSLIVGRDLREPTWRHFIRVQDIPWIRDHVVQSALVYPGAGFICMAMEAMVQLHELRDSQSRKVAGYRLAEVDILRAMLIPDTSEGLEAHISLRPCSTKLLLTNEWYDFCVSSVGDDDKFVDHCRGRITIEFDTSGSADTPRTSLRERSRSTGLMRSVDPSNLYSFLRAQGIYHGPIFQNLKTISSRKDHSESSFVVANTASVMPNGFQSPHVIHPTTLDSIFQGAYTALPGAGLDQNTAMIPRSIQELYLSSALTSDVGQCLVSDTSLIRYDGQSFTVNVDVSSKADSEHTPVLEIKGLRNQSVGQMAPQPGDSSNNDLCFKLDWAPDISSVKQERLKEKFGFPLDPTEADIIMGLRQACIHFIHRSLQSLTAPDRDQLDWHQKRFYDWMVLQIQLAEEDRLAPNSSAWLQCSSSDEQKLLENVRASSVNGQMVVHVGKSMLAILRHEIAPLELMLQDKLLYRYYTDAIKWDRSYQQIDQLVKLHAHKCPTAKIIEIGAGTGGCTRAVLDALSNQGIARCAQYDFTDVSSGFFEAAQQKFAAFDDVIRFQKLDIEKDIEMQGFECGSYDLVIASQVLHATGKMEHTMANVRKLLKPGGKLLLVETTRDEMDLQLVFGLLPGWWLSSEEERQMSPSLSTNSWEKVLKKTGFDGLDIELRDCDSDEFYSFSVMMATASSTIASSSMAFAIVYGEVPLPDQFLDDMKTAISSSAVSDPVVGHLDSIDATGKFCIFIEDPETDILSSPDEKSYASIQKLVTRCKGLIWVSRGGAMHGTRPNSSLKTGLLRTLRLEYTEKRFISLDLDSARPQWNHDSITTINEVLCGALAQNADSSIKDSEFAEQDGQLFVPRISCDIARNEDLSSDSNSPAQMEPFHQPGKLLQMGIKTPGLIDTLQFSKTDATDNLPNDYIEIEPKAFGLNFRDVMVAMGQLEESIMGFECAGVVRRVGPSSAGHNIKVGDRVCALLGGQWTNTVRVHWHSVAPIPQAMDWETAASIPIVFVTAYISLVKIARMQAGETVLIHAASGGVGQAAIILAKHVGAEIFATVGTDEKRDLLIKEYKIPDDHIFSSRNALFAKSIRQRTNGKGVDVVLNCLAGGLLQESFDCLADFGRFIEIGKRDIELNHCLNMGMFARSATFTAVDLIAIGRDRSYMFAEALPKIMTLLQEKAIRPVTPISIYKIGDIETAFRLMQAGKHMGKIVITAPEDAMVPVITRPPKLQLRPDASYLIVGGLGGIGRSLCKNFVENGARSLVLLSRNANVSQQSGEFLDELRSTGCIVGVVDCDISSKTQVEATMLRLKKDMLPIRGIVHAGMVLQDSVFERMSLDDYNTAIRPKVQGSWNLHSGLSDCDLDFFIMLSSLAGVSGSASQANYTAGGAYQDALAKYRRAQGLSAVSIDLGMVQSVGYVAETKGVAERLVRMGYSPISEMEVLKIVEHAITNPPPEASSAQIITGISTKPGRHWTESSWLQDARFATLRERARDVKELSNSQGGAQDKQLAAGQELSMATSLVEAIDVVGRAITAKLATMFLIAAESIIASKSLSEYGVDSLVAVELRNWLAAQLSSDVSVFDVTQSQSLTALATTVATKSSRIDKSLLVA.

In terms of domain architecture, Ketosynthase family 3 (KS3) spans 29-455 (TIPIAIIGMS…GANAHVILES (427 aa)). Residues Cys202, His337, and His377 each act as for beta-ketoacyl synthase activity in the active site. Positions 463–512 (IANGSGRSNGTGNGHNGANGTTNGHNGTNGTTNGHFDATQATNGHYGTDE) are disordered. Residues 469 to 479 (RSNGTGNGHNG) show a composition bias toward gly residues. Low complexity predominate over residues 480–497 (ANGTTNGHNGTNGTTNGH). Positions 608–931 (VFTGQGAQWF…PYISCLLRGQ (324 aa)) are malonyl-CoA:ACP transacylase (MAT) domain. Residues 1000-1138 (HDLLGSLIVG…GRITIEFDTS (139 aa)) form an N-terminal hotdog fold region. Positions 1000–1314 (HDLLGSLIVG…NQSVGQMAPQ (315 aa)) constitute a PKS/mFAS DH domain. Positions 1000–1314 (HDLLGSLIVG…NQSVGQMAPQ (315 aa)) are dehydratase (DH) domain. Residue His1032 is the Proton acceptor; for dehydratase activity of the active site. The interval 1157-1314 (LMRSVDPSNL…NQSVGQMAPQ (158 aa)) is C-terminal hotdog fold. Asp1223 functions as the Proton donor; for dehydratase activity in the catalytic mechanism. The interval 1465–1665 (LYRYYTDAIK…GLDIELRDCD (201 aa)) is methyltransferase (CMet) domain. The tract at residues 1892-2205 (GLIDTLQFSK…AGKHMGKIVI (314 aa)) is enoyl reductase (ER) (ER) domain. Residues 2228 to 2406 (ASYLIVGGLG…AVSIDLGMVQ (179 aa)) are ketoreductase (KR) domain. The 78-residue stretch at 2516–2593 (EAIDVVGRAI…ALATTVATKS (78 aa)) folds into the Carrier domain. Ser2553 carries the post-translational modification O-(pantetheine 4'-phosphoryl)serine.

The protein operates within secondary metabolite biosynthesis. In terms of biological role, highly reducing polyketide synthase (HR-PKS); part of the gene cluster that mediates the biosynthesis of squalestatin S1 (SQS1, also known as zaragozic acid A), a lead compound for the treatment of hyper-cholesterolemia by targeting squalene synthase (SS). Pks1 is responsible for the biosynthesis of the tetraketide sidechain of SQS1. The biosynthesis must involve 3 rounds of chain extension. After the first and second rounds methyl-transfer occurs, and in all rounds of extension the ketoreductase and dehydratase are active. The enoyl reductase and C-MeT are not active in the final round of extension. The sequence is that of Squalestatin tetraketide synthase from Phoma sp. (strain C2932).